Consider the following 254-residue polypeptide: Protein EFFECTOR OF TRANSCRIPTION 3 (254 aa).

Positions 103 to 152 (RCTGLYELGVGVIGQDQGQNFDPDNNVLGVYVGQCVDVKSRLQDYGRRGG) constitute a GIY-YIG domain.

Its subcellular location is the cytoplasm. In Arabidopsis thaliana (Mouse-ear cress), this protein is Protein EFFECTOR OF TRANSCRIPTION 3.